Consider the following 322-residue polypeptide: Undecaprenyl-phosphate 4-deoxy-4-formamido-L-arabinose transferase (322 aa).

Over 1–235 (MFEIHPVKKV…TCLTTTPLRM (235 aa)) the chain is Cytoplasmic. The chain crosses the membrane as a helical span at residues 236–256 (LSLLGSIIAIGGFSIAVLLVI). Over 257 to 269 (LRLTFGPQWAAEG) the chain is Periplasmic. The helical transmembrane segment at 270–290 (VFMLFAVLFTFIGAQFIGMGL) threads the bilayer. Residues 291 to 322 (LGEYIGRIYTDVRARPRYFVQQVIRPSSKENE) lie on the Cytoplasmic side of the membrane.

The protein belongs to the glycosyltransferase 2 family.

It localises to the cell inner membrane. The enzyme catalyses UDP-4-deoxy-4-formamido-beta-L-arabinose + di-trans,octa-cis-undecaprenyl phosphate = 4-deoxy-4-formamido-alpha-L-arabinopyranosyl di-trans,octa-cis-undecaprenyl phosphate + UDP. It participates in glycolipid biosynthesis; 4-amino-4-deoxy-alpha-L-arabinose undecaprenyl phosphate biosynthesis; 4-amino-4-deoxy-alpha-L-arabinose undecaprenyl phosphate from UDP-4-deoxy-4-formamido-beta-L-arabinose and undecaprenyl phosphate: step 1/2. The protein operates within bacterial outer membrane biogenesis; lipopolysaccharide biosynthesis. Its function is as follows. Catalyzes the transfer of 4-deoxy-4-formamido-L-arabinose from UDP to undecaprenyl phosphate. The modified arabinose is attached to lipid A and is required for resistance to polymyxin and cationic antimicrobial peptides. The chain is Undecaprenyl-phosphate 4-deoxy-4-formamido-L-arabinose transferase from Escherichia coli O139:H28 (strain E24377A / ETEC).